Reading from the N-terminus, the 201-residue chain is 3-isopropylmalate dehydratase small subunit (201 aa).

This sequence belongs to the LeuD family. LeuD type 1 subfamily. As to quaternary structure, heterodimer of LeuC and LeuD.

The enzyme catalyses (2R,3S)-3-isopropylmalate = (2S)-2-isopropylmalate. The protein operates within amino-acid biosynthesis; L-leucine biosynthesis; L-leucine from 3-methyl-2-oxobutanoate: step 2/4. Catalyzes the isomerization between 2-isopropylmalate and 3-isopropylmalate, via the formation of 2-isopropylmaleate. The protein is 3-isopropylmalate dehydratase small subunit of Pasteurella multocida (strain Pm70).